We begin with the raw amino-acid sequence, 203 residues long: Small ribosomal subunit protein uS4 (203 aa).

The S4 RNA-binding domain occupies 93–154 (RRLDNVVYRC…KSRNLDAVAD (62 aa)).

Belongs to the universal ribosomal protein uS4 family. As to quaternary structure, part of the 30S ribosomal subunit. Contacts protein S5. The interaction surface between S4 and S5 is involved in control of translational fidelity.

Its function is as follows. One of the primary rRNA binding proteins, it binds directly to 16S rRNA where it nucleates assembly of the body of the 30S subunit. With S5 and S12 plays an important role in translational accuracy. This Chlorobaculum tepidum (strain ATCC 49652 / DSM 12025 / NBRC 103806 / TLS) (Chlorobium tepidum) protein is Small ribosomal subunit protein uS4.